A 175-amino-acid polypeptide reads, in one-letter code: Crossover junction endodeoxyribonuclease RuvC (175 aa).

Active-site residues include aspartate 11, glutamate 71, and histidine 143. 3 residues coordinate Mg(2+): aspartate 11, glutamate 71, and histidine 143.

The protein belongs to the RuvC family. Homodimer which binds Holliday junction (HJ) DNA. The HJ becomes 2-fold symmetrical on binding to RuvC with unstacked arms; it has a different conformation from HJ DNA in complex with RuvA. In the full resolvosome a probable DNA-RuvA(4)-RuvB(12)-RuvC(2) complex forms which resolves the HJ. Mg(2+) serves as cofactor.

It is found in the cytoplasm. The catalysed reaction is Endonucleolytic cleavage at a junction such as a reciprocal single-stranded crossover between two homologous DNA duplexes (Holliday junction).. In terms of biological role, the RuvA-RuvB-RuvC complex processes Holliday junction (HJ) DNA during genetic recombination and DNA repair. Endonuclease that resolves HJ intermediates. Cleaves cruciform DNA by making single-stranded nicks across the HJ at symmetrical positions within the homologous arms, yielding a 5'-phosphate and a 3'-hydroxyl group; requires a central core of homology in the junction. The consensus cleavage sequence is 5'-(A/T)TT(C/G)-3'. Cleavage occurs on the 3'-side of the TT dinucleotide at the point of strand exchange. HJ branch migration catalyzed by RuvA-RuvB allows RuvC to scan DNA until it finds its consensus sequence, where it cleaves and resolves the cruciform DNA. The protein is Crossover junction endodeoxyribonuclease RuvC of Parvibaculum lavamentivorans (strain DS-1 / DSM 13023 / NCIMB 13966).